The chain runs to 159 residues: Biogenesis of lysosome-related organelles complex 1 subunit 2 (159 aa).

Residues 1–37 are disordered; sequence MDKPTTSAAAAAAQDSNLLPDSPQHGPTLSSASSFEA. Residues 14 to 36 are compositionally biased toward polar residues; that stretch reads QDSNLLPDSPQHGPTLSSASSFE. Residues 69–134 adopt a coiled-coil conformation; sequence EDYKLLEEMN…KLEAAAYKLD (66 aa).

The protein belongs to the BLOC1S2 family. Homodimer. Component of the biogenesis of lysosome-related organelles complex-1 (BLOC-1) composed of Blos1, Blos2, Blos3, Blos4, Dysb, Muted, Pldn and Snapin. Interacts with Snapin.

Its function is as follows. Component of the biogenesis of lysosome-related organelles complex-1 (BLOC-1) involved in pigment granule biogenesis. In Drosophila melanogaster (Fruit fly), this protein is Biogenesis of lysosome-related organelles complex 1 subunit 2.